A 152-amino-acid polypeptide reads, in one-letter code: MALKIVIGGDNAGFNYKEALRKDLEADDRVASVEDVGVGGVDDTTSYPNVAVAAAEKVARGEADRALLICGTGLGVAIAANKVKGIRAVTAHDVYSVQRSVLSNNAQVLCMGERVVGLELARALVKEWLGLEFDPQSASAAKVNDICAYEGA.

Residue C70 is the Proton acceptor of the active site.

This sequence belongs to the LacAB/RpiB family.

It carries out the reaction D-erythrulose 4-phosphate = D-erythrose 4-phosphate. Its pathway is carbohydrate metabolism; erythritol degradation. It participates in carbohydrate metabolism; D-threitol degradation. The protein operates within carbohydrate metabolism; L-threitol degradation. Catalyzes the isomerization of D-erythrulose-4P to D-erythrose-4P. Involved in the degradation pathways of L-threitol, D-threitol and erythritol, that allow M.smegmatis to grow on these compounds as the sole carbon source. This is D-erythrulose-4-phosphate isomerase 2 from Mycolicibacterium smegmatis (strain ATCC 700084 / mc(2)155) (Mycobacterium smegmatis).